The sequence spans 364 residues: Very-long-chain (3R)-3-hydroxyacyl-CoA dehydratase 3 (364 aa).

Residues 1–151 (MAMENQVLTP…ETLTNLRKGY (151 aa)) lie on the Cytoplasmic side of the membrane. The CS domain maps to 7 to 96 (VLTPHVYWAQ…KVSQWWERLT (90 aa)). Thr-9 is modified (phosphothreonine). Residues 113–138 (LDESDAEMELRAKEEERLNKLRLESE) are a coiled coil. Ser-116 and Ser-137 each carry phosphoserine. A helical transmembrane segment spans residues 152–172 (LFMYNLVQFLGFSWIFVNLTV). Topologically, residues 173-191 (RFCILGKESFYDTFHTVAD) are lumenal. Residues 192–212 (MMYFCQMLAVVETINAAIGVT) traverse the membrane as a helical segment. Residues 213-214 (TS) are Cytoplasmic-facing. A helical membrane pass occupies residues 215–235 (PVLPSLIQLLGRNFILFIIFG). Residues 236 to 244 (TMEEMQNKA) are Lumenal-facing. The helical transmembrane segment at 245 to 265 (VVFFVFYLWSAIEIFRYSFYM) threads the bilayer. The Cytoplasmic segment spans residues 266 to 282 (LTCIDMDWEVLTWLRYT). The chain crosses the membrane as a helical span at residues 283-303 (LWIPLYPLGCLAEAVSVVQSI). Residues Tyr-288 and Glu-295 contribute to the active site. The Lumenal segment spans residues 304 to 324 (PIFNETGRFSFTLPYPVKIKV). Residues 325–345 (RFSFFLQIYLIMIFLGLYINF) form a helical membrane-spanning segment. Over 346–364 (RHLYKQRRRRYGQKKKKIH) the chain is Cytoplasmic.

The protein belongs to the very long-chain fatty acids dehydratase HACD family. May interact with enzymes of the ELO family (including ELOVL1); with those enzymes that mediate condensation, the first of the four steps of the reaction cycle responsible for fatty acids elongation, may be part of a larger fatty acids elongase complex. Interacts with RAC1.

The protein resides in the endoplasmic reticulum membrane. It catalyses the reaction a very-long-chain (3R)-3-hydroxyacyl-CoA = a very-long-chain (2E)-enoyl-CoA + H2O. It carries out the reaction (3R)-hydroxyhexadecanoyl-CoA = (2E)-hexadecenoyl-CoA + H2O. It functions in the pathway lipid metabolism; fatty acid biosynthesis. In terms of biological role, catalyzes the third of the four reactions of the long-chain fatty acids elongation cycle. This endoplasmic reticulum-bound enzymatic process, allows the addition of two carbons to the chain of long- and very long-chain fatty acids/VLCFAs per cycle. This enzyme catalyzes the dehydration of the 3-hydroxyacyl-CoA intermediate into trans-2,3-enoyl-CoA, within each cycle of fatty acid elongation. Thereby, it participates in the production of VLCFAs of different chain lengths that are involved in multiple biological processes as precursors of membrane lipids and lipid mediators. Involved in Rac1-signaling pathways leading to the modulation of gene expression. This chain is Very-long-chain (3R)-3-hydroxyacyl-CoA dehydratase 3, found in Pongo abelii (Sumatran orangutan).